Here is a 57-residue protein sequence, read N- to C-terminus: Large ribosomal subunit protein bL32 (57 aa).

The protein belongs to the bacterial ribosomal protein bL32 family.

This chain is Large ribosomal subunit protein bL32, found in Staphylococcus epidermidis (strain ATCC 35984 / DSM 28319 / BCRC 17069 / CCUG 31568 / BM 3577 / RP62A).